The following is a 765-amino-acid chain: Lysyl oxidase homolog 2 (765 aa).

Residues 1-19 (MLVSHVFLLTLSLSVPSLG) form the signal peptide. SRCR domains lie at 49–150 (VRLA…VQCS), 179–293 (IRPI…VSCT), 317–416 (VRLR…VRCN), and 426–535 (VRLS…VSCV). 9 disulfide bridges follow: Cys-75–Cys-139, Cys-88–Cys-149, Cys-119–Cys-129, Cys-209–Cys-282, Cys-222–Cys-292, Cys-256–Cys-266, Cys-342–Cys-405, Cys-355–Cys-415, and Cys-386–Cys-396. N-linked (GlcNAc...) asparagine glycosylation occurs at Asn-279. The N-linked (GlcNAc...) asparagine glycan is linked to Asn-446. 3 cysteine pairs are disulfide-bonded: Cys-455–Cys-521, Cys-468–Cys-534, and Cys-502–Cys-512. The lysyl-oxidase like stretch occupies residues 539–742 (PDLVLNAALV…WMYNCHIGGS (204 aa)). Asp-540 and Leu-541 together coordinate Ca(2+). Cystine bridges form between Cys-564–Cys-616, Cys-570–Cys-686, Cys-648–Cys-664, and Cys-654–Cys-676. Cu cation contacts are provided by His-617, His-619, and His-621. Residue Asn-635 is glycosylated (N-linked (GlcNAc...) asparagine). A cross-link (lysine tyrosylquinone (Lys-Tyr)) is located at residues 644-680 (KASFCLEDSECEADIQKQYVCANFGEQGITVGCWDLY). Tyr-680 carries the 2',4',5'-topaquinone modification. The Ca(2+) site is built by Glu-713, Asp-715, Asn-718, and Asn-719. Cys-723 and Cys-737 are disulfide-bonded.

This sequence belongs to the lysyl oxidase family. Cu cation serves as cofactor. Requires lysine tyrosylquinone residue as cofactor. Post-translationally, the lysine tyrosylquinone cross-link (LTQ) is generated by condensation of the epsilon-amino group of a lysine with a topaquinone produced by oxidation of tyrosine.

The protein resides in the secreted. It localises to the extracellular space. It is found in the extracellular matrix. The protein localises to the basement membrane. Its subcellular location is the nucleus. The protein resides in the chromosome. It localises to the endoplasmic reticulum. The catalysed reaction is L-lysyl-[protein] + O2 + H2O = (S)-2-amino-6-oxohexanoyl-[protein] + H2O2 + NH4(+). In terms of biological role, mediates the post-translational oxidative deamination of lysine residues on target proteins leading to the formation of deaminated lysine (allysine). Acts as a transcription corepressor and specifically mediates deamination of trimethylated 'Lys-4' of histone H3 (H3K4me3), a specific tag for epigenetic transcriptional activation. Shows no activity against histone H3 when it is trimethylated on 'Lys-9' (H3K9me3) or 'Lys-27' (H3K27me3) or when 'Lys-4' is monomethylated (H3K4me1) or dimethylated (H3K4me2). Also mediates deamination of methylated TAF10, a member of the transcription factor IID (TFIID) complex, which induces release of TAF10 from promoters, leading to inhibition of TFIID-dependent transcription. LOXL2-mediated deamination of TAF10 results in transcriptional repression of genes required for embryonic stem cell pluripotency. Involved in epithelial to mesenchymal transition (EMT) and participates in repression of E-cadherin, probably by mediating deamination of histone H3. When secreted into the extracellular matrix, promotes cross-linking of extracellular matrix proteins by mediating oxidative deamination of peptidyl lysine residues in precursors to fibrous collagen and elastin. Acts as a regulator of sprouting angiogenesis, probably via collagen IV scaffolding. Acts as a regulator of chondrocyte differentiation, probably by regulating expression of factors that control chondrocyte differentiation. This chain is Lysyl oxidase homolog 2 (loxl2), found in Xenopus laevis (African clawed frog).